Consider the following 160-residue polypeptide: Putative pre-16S rRNA nuclease (160 aa).

Belongs to the YqgF nuclease family.

The protein resides in the cytoplasm. Its function is as follows. Could be a nuclease involved in processing of the 5'-end of pre-16S rRNA. The protein is Putative pre-16S rRNA nuclease of Cutibacterium acnes (strain DSM 16379 / KPA171202) (Propionibacterium acnes).